The chain runs to 274 residues: MTQLTNFSESFSNQNSNLHQPYNFNSHQPPEENHYYVREPNGKRPFPVEFELDMEYVPRTKRRFDKISACLENFSISNDKPSPINICRESSSDEEMDEVYDDSNFDQCTESTSIPLVVEPDDEPAVAKKIRLDESIQRYFEKCRQGPIDFLPKPEKLKGNEMVIWQPRILVSPKNDFNMAGRIQEIDDEEEDRVNEEIKTRIIENEGMIDEDTRNETTGIVELGTGSDHSDIGSSWSSPMASPTGSSQIVELDPDSPNSLTNGSVTDEEMMEFE.

A compositionally biased stretch (low complexity) spans 1 to 17; the sequence is MTQLTNFSESFSNQNSN. Disordered regions lie at residues 1 to 38 and 222 to 274; these read MTQL…YYVR and ELGT…MEFE. Residues 18 to 28 are compositionally biased toward polar residues; that stretch reads LHQPYNFNSHQ. Over residues 29–38 the composition is skewed to basic and acidic residues; that stretch reads PPEENHYYVR. Composition is skewed to polar residues over residues 239–249 and 256–265; these read PMASPTGSSQI and SPNSLTNGSV.

This is an uncharacterized protein from Caenorhabditis elegans.